The following is a 399-amino-acid chain: Methylthioribose kinase (399 aa).

ATP-binding positions include asparagine 40, lysine 57, and 111–113 (EDL). Aspartate 229 is a substrate binding site. 246–248 (DAE) is an ATP binding site. A substrate-binding site is contributed by arginine 344.

The protein belongs to the methylthioribose kinase family. As to quaternary structure, homodimer.

The catalysed reaction is 5-(methylsulfanyl)-D-ribose + ATP = 5-(methylsulfanyl)-alpha-D-ribose 1-phosphate + ADP + H(+). It participates in amino-acid biosynthesis; L-methionine biosynthesis via salvage pathway; S-methyl-5-thio-alpha-D-ribose 1-phosphate from S-methyl-5'-thioadenosine (hydrolase route): step 2/2. Catalyzes the phosphorylation of methylthioribose into methylthioribose-1-phosphate. This chain is Methylthioribose kinase, found in Yersinia enterocolitica serotype O:8 / biotype 1B (strain NCTC 13174 / 8081).